Here is a 316-residue protein sequence, read N- to C-terminus: 4-hydroxy-3-methylbut-2-enyl diphosphate reductase (316 aa).

Cysteine 12 serves as a coordination point for [4Fe-4S] cluster. (2E)-4-hydroxy-3-methylbut-2-enyl diphosphate-binding residues include histidine 43 and histidine 81. Residues histidine 43 and histidine 81 each coordinate dimethylallyl diphosphate. Residues histidine 43 and histidine 81 each coordinate isopentenyl diphosphate. Cysteine 103 is a binding site for [4Fe-4S] cluster. A (2E)-4-hydroxy-3-methylbut-2-enyl diphosphate-binding site is contributed by histidine 131. Histidine 131 serves as a coordination point for dimethylallyl diphosphate. Isopentenyl diphosphate is bound at residue histidine 131. Glutamate 133 functions as the Proton donor in the catalytic mechanism. Residue threonine 170 coordinates (2E)-4-hydroxy-3-methylbut-2-enyl diphosphate. Cysteine 198 contacts [4Fe-4S] cluster. 3 residues coordinate (2E)-4-hydroxy-3-methylbut-2-enyl diphosphate: serine 226, asparagine 228, and serine 271. Residues serine 226, asparagine 228, and serine 271 each contribute to the dimethylallyl diphosphate site. Isopentenyl diphosphate is bound by residues serine 226, asparagine 228, and serine 271.

Belongs to the IspH family. [4Fe-4S] cluster is required as a cofactor.

It carries out the reaction isopentenyl diphosphate + 2 oxidized [2Fe-2S]-[ferredoxin] + H2O = (2E)-4-hydroxy-3-methylbut-2-enyl diphosphate + 2 reduced [2Fe-2S]-[ferredoxin] + 2 H(+). It catalyses the reaction dimethylallyl diphosphate + 2 oxidized [2Fe-2S]-[ferredoxin] + H2O = (2E)-4-hydroxy-3-methylbut-2-enyl diphosphate + 2 reduced [2Fe-2S]-[ferredoxin] + 2 H(+). It functions in the pathway isoprenoid biosynthesis; dimethylallyl diphosphate biosynthesis; dimethylallyl diphosphate from (2E)-4-hydroxy-3-methylbutenyl diphosphate: step 1/1. The protein operates within isoprenoid biosynthesis; isopentenyl diphosphate biosynthesis via DXP pathway; isopentenyl diphosphate from 1-deoxy-D-xylulose 5-phosphate: step 6/6. Catalyzes the conversion of 1-hydroxy-2-methyl-2-(E)-butenyl 4-diphosphate (HMBPP) into a mixture of isopentenyl diphosphate (IPP) and dimethylallyl diphosphate (DMAPP). Acts in the terminal step of the DOXP/MEP pathway for isoprenoid precursor biosynthesis. This chain is 4-hydroxy-3-methylbut-2-enyl diphosphate reductase, found in Geobacillus thermodenitrificans (strain NG80-2).